Reading from the N-terminus, the 233-residue chain is Probable fimbrial chaperone protein ElfD (233 aa).

The signal sequence occupies residues 1–26; that stretch reads MKTCITKGIVTVSLTAILLSCSSAWA.

This sequence belongs to the periplasmic pilus chaperone family.

The protein localises to the periplasm. In terms of biological role, part of the elfADCG-ycbUVF fimbrial operon, which promotes adhesion of bacteria to different abiotic surfaces. Could be required for the biogenesis of the ElfA fimbriae. The polypeptide is Probable fimbrial chaperone protein ElfD (elfD) (Escherichia coli (strain K12)).